Here is a 509-residue protein sequence, read N- to C-terminus: tRNA-2-methylthio-N(6)-dimethylallyladenosine synthase (509 aa).

Residues 1–15 show a composition bias toward polar residues; it reads MNEQQRLASQQVNSS. Positions 1–26 are disordered; sequence MNEQQRLASQQVNSSTKKEEKDYSKY. Over residues 16–25 the composition is skewed to basic and acidic residues; that stretch reads TKKEEKDYSK. In terms of domain architecture, MTTase N-terminal spans 66–184; that stretch reads RKFYIRTYGC…LPYILKDAMF (119 aa). The [4Fe-4S] cluster site is built by Cys-75, Cys-111, Cys-145, Cys-221, Cys-225, and Cys-228. The region spanning 207–437 is the Radical SAM core domain; sequence RRGDIKAWVN…NALVNKLAIE (231 aa). The 64-residue stretch at 440–503 folds into the TRAM domain; that stretch reads DRYKGQIVEV…TWSLNGELVE (64 aa).

Belongs to the methylthiotransferase family. MiaB subfamily. Monomer. [4Fe-4S] cluster serves as cofactor.

It is found in the cytoplasm. The catalysed reaction is N(6)-dimethylallyladenosine(37) in tRNA + (sulfur carrier)-SH + AH2 + 2 S-adenosyl-L-methionine = 2-methylsulfanyl-N(6)-dimethylallyladenosine(37) in tRNA + (sulfur carrier)-H + 5'-deoxyadenosine + L-methionine + A + S-adenosyl-L-homocysteine + 2 H(+). Its function is as follows. Catalyzes the methylthiolation of N6-(dimethylallyl)adenosine (i(6)A), leading to the formation of 2-methylthio-N6-(dimethylallyl)adenosine (ms(2)i(6)A) at position 37 in tRNAs that read codons beginning with uridine. This is tRNA-2-methylthio-N(6)-dimethylallyladenosine synthase from Bacillus thuringiensis (strain Al Hakam).